The following is a 154-amino-acid chain: SsrA-binding protein (154 aa).

The protein belongs to the SmpB family.

The protein resides in the cytoplasm. Required for rescue of stalled ribosomes mediated by trans-translation. Binds to transfer-messenger RNA (tmRNA), required for stable association of tmRNA with ribosomes. tmRNA and SmpB together mimic tRNA shape, replacing the anticodon stem-loop with SmpB. tmRNA is encoded by the ssrA gene; the 2 termini fold to resemble tRNA(Ala) and it encodes a 'tag peptide', a short internal open reading frame. During trans-translation Ala-aminoacylated tmRNA acts like a tRNA, entering the A-site of stalled ribosomes, displacing the stalled mRNA. The ribosome then switches to translate the ORF on the tmRNA; the nascent peptide is terminated with the 'tag peptide' encoded by the tmRNA and targeted for degradation. The ribosome is freed to recommence translation, which seems to be the essential function of trans-translation. This chain is SsrA-binding protein, found in Synechococcus sp. (strain JA-3-3Ab) (Cyanobacteria bacterium Yellowstone A-Prime).